Consider the following 470-residue polypeptide: Cyclic AMP-responsive element-binding protein 3-like protein 3 (470 aa).

Residues 1-319 (MDGDISTGKM…TSKPAHAGTC (319 aa)) lie on the Cytoplasmic side of the membrane. The disordered stretch occupies residues 59-145 (SDSDEFLNSI…PEPPRTQVHE (87 aa)). The 64-residue stretch at 239–302 (VLKKIRRKIR…LSLLEQLKHL (64 aa)) folds into the bZIP domain. The tract at residues 241–270 (KKIRRKIRNKQSAQESRKKKKEYIDGLENR) is basic motif. A leucine-zipper region spans residues 281–302 (LQRKVLHLEKQNLSLLEQLKHL). Residue Lys290 forms a Glycyl lysine isopeptide (Lys-Gly) (interchain with G-Cter in ubiquitin) linkage. Residues 320–340 (IAVLLLSFVLIILPSISPFTA) form a helical; Signal-anchor for type II membrane protein membrane-spanning segment. The Lumenal portion of the chain corresponds to 341–470 (NKVDSPGDFI…RVVQDALGVL (130 aa)). Asn410 and Asn417 each carry an N-linked (GlcNAc...) asparagine glycan.

The protein belongs to the bZIP family. ATF subfamily. As to quaternary structure, binds DNA as a dimer. May form homodimers. Interacts with ATF6. Interacts with SYNV1/HRD1; this interaction leads to CREB3L3 ubiquitination and proteasomal degradation. In terms of processing, controlled by regulated intramembrane proteolysis (RIP). Following ER stress a fragment containing the cytoplasmic transcription factor domain is released by proteolysis. The cleavage seems to be performed sequentially by site-1 and site-2 proteases (PS1 and PS2). N-glycosylation is required for optimal proteolytic activation. Post-translationally, ubiquitinated at Lys-290 by SYNV1/HRD1 via 'Lys-27'-linked ubiquitin.

The protein localises to the endoplasmic reticulum membrane. Its subcellular location is the nucleus. Functionally, transcription factor that may act during endoplasmic reticulum stress by activating unfolded protein response target genes. Activated in response to cAMP stimulation. Binds the cAMP response element (CRE). Activates transcription through box-B element and CRE. Seems to function synergistically with ATF6. In acute inflammatory response, may activate expression of acute phase response (APR) genes. May be involved in growth suppression. Regulates FGF21 transcription. Plays a crucial role in the regulation of triglyceride metabolism and is required for the maintenance of normal plasma triglyceride concentrations. The sequence is that of Cyclic AMP-responsive element-binding protein 3-like protein 3 (Creb3l3) from Rattus norvegicus (Rat).